A 305-amino-acid chain; its full sequence is GPI-anchored hemophore cfmA (305 aa).

The N-terminal stretch at 1–18 is a signal peptide; it reads MKASVSLLLLSAASMASA. Positions 19-111 constitute a CFEM domain; the sequence is AMSVSQCAQM…GSGSGSDSGS (93 aa). 4 disulfides stabilise this stretch: cysteine 25–cysteine 68, cysteine 29–cysteine 63, cysteine 42–cysteine 49, and cysteine 51–cysteine 84. Aspartate 46 lines the heme pocket. A disordered region spans residues 92 to 287; the sequence is TATGAGGSSS…STGNVAPRGA (196 aa). Over residues 95-149 the composition is skewed to gly residues; that stretch reads GAGGSSSGSGSGSDSGSGSGSGSGSGSGSGSGSGSSSGSGSGSGSGSGSGSGSNS. 3 stretches are compositionally biased toward low complexity: residues 150 to 186, 196 to 259, and 267 to 287; these read GSGS…NSTT, GASS…TATG, and GSAS…PRGA. N-linked (GlcNAc...) asparagine glycans are attached at residues asparagine 183, asparagine 203, asparagine 237, asparagine 243, and asparagine 275. Serine 276 is lipidated: GPI-like-anchor amidated serine. Residues 277–305 constitute a propeptide, removed in mature form; it reads SSTGNVAPRGAVVGSGAVGALALAALIIL.

The protein belongs to the RBT5 family. Post-translationally, the GPI-like anchor contains a phosphoceramide lipid group. The GPI-anchor is attached to the protein in the endoplasmic reticulum and serves to target the protein to the cell surface. There, the glucosamine-inositol phospholipid moiety is cleaved off and the GPI-modified mannoprotein is covalently attached via its lipidless GPI glycan remnant to the 1,6-beta-glucan of the outer cell wall layer.

Its subcellular location is the secreted. It localises to the cell wall. The protein resides in the cell membrane. Functionally, GPI-anchored cell wall protein involved in stabilizing the cell wall. Not implicated in virulence, heme uptake and biofilm formation. This chain is GPI-anchored hemophore cfmA, found in Aspergillus fumigatus (strain ATCC MYA-4609 / CBS 101355 / FGSC A1100 / Af293) (Neosartorya fumigata).